The primary structure comprises 509 residues: 2-isopropylmalate synthase (509 aa).

A Pyruvate carboxyltransferase domain is found at 5–267 (IQIFDTTLRD…QTALNLEETK (263 aa)). Mn(2+) is bound by residues Asp-14, His-202, His-204, and Asn-238. The tract at residues 391 to 509 (KLETLQLQYV…AAENVEKVGN (119 aa)) is regulatory domain.

Belongs to the alpha-IPM synthase/homocitrate synthase family. LeuA type 1 subfamily. Homodimer. Mn(2+) serves as cofactor.

The protein localises to the cytoplasm. The catalysed reaction is 3-methyl-2-oxobutanoate + acetyl-CoA + H2O = (2S)-2-isopropylmalate + CoA + H(+). It participates in amino-acid biosynthesis; L-leucine biosynthesis; L-leucine from 3-methyl-2-oxobutanoate: step 1/4. Catalyzes the condensation of the acetyl group of acetyl-CoA with 3-methyl-2-oxobutanoate (2-ketoisovalerate) to form 3-carboxy-3-hydroxy-4-methylpentanoate (2-isopropylmalate). This chain is 2-isopropylmalate synthase, found in Staphylococcus aureus (strain Mu3 / ATCC 700698).